The sequence spans 316 residues: Thymidylate synthase (316 aa).

DUMP-binding positions include Arg-23 and Arg-178–Arg-179. Cys-198 acts as the Nucleophile in catalysis. DUMP-binding positions include Arg-218–Asp-221, Asn-229, and His-259–Tyr-261. Residue Asp-221 coordinates (6R)-5,10-methylene-5,6,7,8-tetrahydrofolate. Position 315 (Ala-315) interacts with (6R)-5,10-methylene-5,6,7,8-tetrahydrofolate.

The protein belongs to the thymidylate synthase family. Bacterial-type ThyA subfamily. As to quaternary structure, homodimer.

It localises to the cytoplasm. It carries out the reaction dUMP + (6R)-5,10-methylene-5,6,7,8-tetrahydrofolate = 7,8-dihydrofolate + dTMP. Its pathway is pyrimidine metabolism; dTTP biosynthesis. In terms of biological role, catalyzes the reductive methylation of 2'-deoxyuridine-5'-monophosphate (dUMP) to 2'-deoxythymidine-5'-monophosphate (dTMP) while utilizing 5,10-methylenetetrahydrofolate (mTHF) as the methyl donor and reductant in the reaction, yielding dihydrofolate (DHF) as a by-product. This enzymatic reaction provides an intracellular de novo source of dTMP, an essential precursor for DNA biosynthesis. This is Thymidylate synthase from Pediococcus pentosaceus (strain ATCC 25745 / CCUG 21536 / LMG 10740 / 183-1w).